A 489-amino-acid polypeptide reads, in one-letter code: Tripartite motif-containing protein 10 (489 aa).

Residues cysteine 16–lysine 61 form an RING-type zinc finger. The B box-type zinc-finger motif lies at aspartate 94–leucine 135. Cysteine 99, histidine 102, cysteine 121, and histidine 127 together coordinate Zn(2+). Positions tyrosine 142–arginine 245 form a coiled coil. Residues arginine 292 to alanine 486 form the B30.2/SPRY domain.

Belongs to the TRIM/RBCC family. In terms of assembly, interacts with IFNAR1; this interaction prevents association of IFNAR1 with TYK2.

Its subcellular location is the cytoplasm. In terms of biological role, E3 ligase that plays an essential role in the differentiation and survival of terminal erythroid cells. May directly bind to PTEN and promote its ubiquitination, resulting in its proteasomal degradation and activation of hypertrophic signaling. In addition, plays a role in immune response regulation by repressing the phosphorylation of STAT1 and STAT2 in the interferon/JAK/STAT signaling pathway independent of its E3 ligase activity. Mechanistically, interacts with the intracellular domain of IFNAR1 and thereby inhibits the association between TYK2 and IFNAR1. This Bos taurus (Bovine) protein is Tripartite motif-containing protein 10 (TRIM10).